The following is a 514-amino-acid chain: Carboxysome shell carbonic anhydrase (514 aa).

The interval 1–27 is disordered; that stretch reads MAYRNRNLASQTQRPLAPTAPRRRPVV. Position 175 (cysteine 175) interacts with Zn(2+). Catalysis depends on aspartate 177, which acts as the Proton acceptor. Residues histidine 243 and cysteine 254 each coordinate Zn(2+).

It belongs to the beta-class carbonic anhydrase family. CsoSCA subfamily. As to quaternary structure, homodimer. The cofactor is Zn(2+).

The protein resides in the carboxysome. It catalyses the reaction hydrogencarbonate + H(+) = CO2 + H2O. In terms of biological role, reversible hydration of carbon dioxide. Essential for photosynthetic carbon dioxide fixation, supplies CO(2) to RuBisCO (ribulose bisphosphate carboxylase, cbbL-cbbS) in the carboxysome. The sequence is that of Carboxysome shell carbonic anhydrase from Prochlorococcus marinus (strain MIT 9313).